The chain runs to 514 residues: DNA damage-binding protein CMR1 (514 aa).

The interval 26–116 (NLDSLSQSIK…VKQEEKEELS (91 aa)) is disordered. The span at 34 to 44 (IKRELPRASET) shows a compositional bias: basic and acidic residues. Over residues 45-55 (KKRKTTPRTKA) the composition is skewed to basic residues. Basic and acidic residues-rich tracts occupy residues 56 to 65 (VKKEDVEPSR) and 92 to 116 (KFEDKVIKSDSTEPEVKQEEKEELS). WD repeat units follow at residues 180-221 (ISHT…DDSE), 229-269 (PHGK…STEV), 280-320 (DYAL…KPLK), 327-367 (LHDK…KANA), 385-423 (SSRLSVSCVDWNSENRLVCNGYDDYINIFDLNEESLIPD), 438-481 (GRWV…IAHL), and 483-514 (DSVGAVPAVCGFHPTKNWVVGGSASGKVYLFE).

Belongs to the WD repeat DDB2/WDR76 family.

DNA-binding protein that binds to both single- and double-stranded DNA. Binds preferentially to UV-damaged DNA. May be involved in DNA-metabolic processes. The sequence is that of DNA damage-binding protein CMR1 (PRW1) from Scheffersomyces stipitis (strain ATCC 58785 / CBS 6054 / NBRC 10063 / NRRL Y-11545) (Yeast).